The sequence spans 341 residues: tRNA N6-adenosine threonylcarbamoyltransferase (341 aa).

2 residues coordinate Fe cation: His115 and His119. Residues 137–141 (IVSGG), Asp170, Gly183, Asp187, and Asn276 contribute to the substrate site. Asp304 provides a ligand contact to Fe cation.

The protein belongs to the KAE1 / TsaD family. Fe(2+) serves as cofactor.

It is found in the cytoplasm. It catalyses the reaction L-threonylcarbamoyladenylate + adenosine(37) in tRNA = N(6)-L-threonylcarbamoyladenosine(37) in tRNA + AMP + H(+). Its function is as follows. Required for the formation of a threonylcarbamoyl group on adenosine at position 37 (t(6)A37) in tRNAs that read codons beginning with adenine. Is involved in the transfer of the threonylcarbamoyl moiety of threonylcarbamoyl-AMP (TC-AMP) to the N6 group of A37, together with TsaE and TsaB. TsaD likely plays a direct catalytic role in this reaction. In Staphylococcus aureus (strain USA300), this protein is tRNA N6-adenosine threonylcarbamoyltransferase.